The sequence spans 67 residues: Bowman-Birk type major trypsin inhibitor (67 aa).

5 cysteine pairs are disulfide-bonded: cysteine 8/cysteine 63, cysteine 9/cysteine 24, cysteine 14/cysteine 22, cysteine 31/cysteine 38, and cysteine 35/cysteine 51.

Belongs to the Bowman-Birk serine protease inhibitor family.

The polypeptide is Bowman-Birk type major trypsin inhibitor (Setaria italica (Foxtail millet)).